The primary structure comprises 310 residues: DNA repair nuclease APEX1 (310 aa).

The segment at 1-51 (MPKRAKKNEEGVDGEADNGTAAAKKEKKGKEPEAPILYEDPPEKLTSKDGR) is disordered. Over residues 41 to 51 (PPEKLTSKDGR) the composition is skewed to basic and acidic residues. Positions 63 and 89 each coordinate Mg(2+). Tyrosine 164 is a catalytic residue. Residues aspartate 203, asparagine 205, and aspartate 300 each coordinate Mg(2+). The active-site Proton donor/acceptor is the aspartate 203.

This sequence belongs to the DNA repair enzymes AP/ExoA family. Mg(2+) serves as cofactor. It depends on Mn(2+) as a cofactor.

It is found in the nucleus. The protein resides in the nucleolus. Its subcellular location is the nucleus speckle. It localises to the endoplasmic reticulum. The protein localises to the cytoplasm. It is found in the mitochondrion. The catalysed reaction is Exonucleolytic cleavage in the 3'- to 5'-direction to yield nucleoside 5'-phosphates.. In terms of biological role, functions as an apurinic/apyrimidinic (AP) endodeoxyribonuclease in the DNA base excision repair (BER) pathway of DNA lesions induced by oxidative and alkylating agents. Initiates repair of AP sites in DNA by catalyzing hydrolytic incision of the phosphodiester backbone immediately adjacent to the damage, generating a single-strand break with 5'-deoxyribose phosphate and 3'-hydroxyl ends. Has 3'-5' exoribonuclease activity on mismatched deoxyribonucleotides at the 3' termini of nicked or gapped DNA molecules during short-patch BER. May also play a role in the epigenetic regulation of gene expression by participating in DNA demethylation. Required for passage through the mid-blastula transition MBT. May also act as an endoribonuclease involved in the control of single-stranded RNA metabolism. Has no redox activity. Binds DNA and RNA. This chain is DNA repair nuclease APEX1 (apex1), found in Danio rerio (Zebrafish).